The following is a 202-amino-acid chain: Orotate phosphoribosyltransferase (202 aa).

Residues lysine 93 and 113-121 each bind 5-phospho-alpha-D-ribose 1-diphosphate; that span reads EDIITTGGS. Residues threonine 117 and arginine 145 each contribute to the orotate site.

Belongs to the purine/pyrimidine phosphoribosyltransferase family. PyrE subfamily. Homodimer. Mg(2+) serves as cofactor.

It carries out the reaction orotidine 5'-phosphate + diphosphate = orotate + 5-phospho-alpha-D-ribose 1-diphosphate. It functions in the pathway pyrimidine metabolism; UMP biosynthesis via de novo pathway; UMP from orotate: step 1/2. In terms of biological role, catalyzes the transfer of a ribosyl phosphate group from 5-phosphoribose 1-diphosphate to orotate, leading to the formation of orotidine monophosphate (OMP). This chain is Orotate phosphoribosyltransferase, found in Campylobacter curvus (strain 525.92).